Consider the following 146-residue polypeptide: Anti-sigma F factor (146 aa).

This sequence belongs to the anti-sigma-factor family.

The catalysed reaction is L-seryl-[protein] + ATP = O-phospho-L-seryl-[protein] + ADP + H(+). It carries out the reaction L-threonyl-[protein] + ATP = O-phospho-L-threonyl-[protein] + ADP + H(+). In terms of biological role, binds to sigma F and blocks its ability to form an RNA polymerase holoenzyme (E-sigma F). Phosphorylates SpoIIAA on a serine residue. This phosphorylation may enable SpoIIAA to act as an anti-anti-sigma factor that counteracts SpoIIAB and thus releases sigma F from inhibition. The chain is Anti-sigma F factor from Bacillus licheniformis.